Reading from the N-terminus, the 349-residue chain is UDP-3-O-acylglucosamine N-acyltransferase (349 aa).

His246 functions as the Proton acceptor in the catalytic mechanism.

This sequence belongs to the transferase hexapeptide repeat family. LpxD subfamily. Homotrimer.

It catalyses the reaction a UDP-3-O-[(3R)-3-hydroxyacyl]-alpha-D-glucosamine + a (3R)-hydroxyacyl-[ACP] = a UDP-2-N,3-O-bis[(3R)-3-hydroxyacyl]-alpha-D-glucosamine + holo-[ACP] + H(+). It functions in the pathway bacterial outer membrane biogenesis; LPS lipid A biosynthesis. Catalyzes the N-acylation of UDP-3-O-acylglucosamine using 3-hydroxyacyl-ACP as the acyl donor. Is involved in the biosynthesis of lipid A, a phosphorylated glycolipid that anchors the lipopolysaccharide to the outer membrane of the cell. The chain is UDP-3-O-acylglucosamine N-acyltransferase from Trichormus variabilis (strain ATCC 29413 / PCC 7937) (Anabaena variabilis).